The primary structure comprises 119 residues: uncharacterized protein (119 aa).

A run of 2 helical transmembrane segments spans residues 52-72 (IVLF…VINI) and 88-108 (VLFS…IFLI).

Its subcellular location is the membrane. This is an uncharacterized protein from Dictyostelium discoideum (Social amoeba).